Reading from the N-terminus, the 100-residue chain is Large ribosomal subunit protein uL23 (100 aa).

It belongs to the universal ribosomal protein uL23 family. As to quaternary structure, part of the 50S ribosomal subunit. Contacts protein L29, and trigger factor when it is bound to the ribosome.

Functionally, one of the early assembly proteins it binds 23S rRNA. One of the proteins that surrounds the polypeptide exit tunnel on the outside of the ribosome. Forms the main docking site for trigger factor binding to the ribosome. This is Large ribosomal subunit protein uL23 from Thermotoga sp. (strain RQ2).